We begin with the raw amino-acid sequence, 169 residues long: Disulfide bond formation protein B (169 aa).

Topologically, residues 1 to 13 (MSQLQQFCHNRFS) are cytoplasmic. A helical membrane pass occupies residues 14-30 (WGLLLLSAIGLELAALF). Over 31 to 48 (FQYGMDLAPCVMCIYIRV) the chain is Periplasmic. Cys-40 and Cys-43 are disulfide-bonded. Residues 49 to 64 (AVLGIILAALIGILQP) form a helical membrane-spanning segment. At 65–71 (KVWLLRL) the chain is on the cytoplasmic side. The helical transmembrane segment at 72–89 (VGMAGWAVSAVWGFKLAY) threads the bilayer. At 90 to 144 (ELNQMQVNPSPFATCSFYPEFPSFMPLDTWLPSVFSPTGMCSDSPWSWLSVSMAQ) the chain is on the periplasmic side. Cys-104 and Cys-130 are disulfide-bonded. Residues 145–163 (WMMLGFAIYGVIWLLMLLP) form a helical membrane-spanning segment. Residues 164–169 (ALKSAK) lie on the Cytoplasmic side of the membrane.

Belongs to the DsbB family.

The protein resides in the cell inner membrane. Its function is as follows. Required for disulfide bond formation in some periplasmic proteins. Acts by oxidizing the DsbA protein. The polypeptide is Disulfide bond formation protein B (Shewanella frigidimarina (strain NCIMB 400)).